A 778-amino-acid chain; its full sequence is Exo-beta-D-glucosaminidase (778 aa).

Residues tyrosine 55, 104–105 (GE), 180–181 (DE), glutamate 308, glutamate 349, and tyrosine 381 each bind substrate. The Proton donor role is filled by glutamate 181. Glutamate 349 functions as the Nucleophile in the catalytic mechanism.

It belongs to the glycosyl hydrolase 35 family. Homodimer.

The protein resides in the cytoplasm. The enzyme catalyses beta-D-glucosaminyl-(1-&gt;4)-N-acetyl-D-glucosamine + H2O = D-glucosamine + N-acetyl-D-glucosamine. It participates in glycan degradation; chitin degradation. In terms of biological role, exo-type enzyme that specifically cleaves the non-reducing terminal glycosidic bond of chitooligosaccharides. Catalyzes the hydrolysis of GlcN-GlcNAc to glucosamine (GlcN) and N-acetylglucosamine (GlcNAc). Involved in chitin degradation. Can also hydrolyze chitosan and chitooligosaccharides of various chain lengths. In Pyrococcus horikoshii (strain ATCC 700860 / DSM 12428 / JCM 9974 / NBRC 100139 / OT-3), this protein is Exo-beta-D-glucosaminidase.